A 1035-amino-acid chain; its full sequence is Tyrosine-protein kinase-like otk (1035 aa).

A signal peptide spans 1-23 (MDMDVMMISMCILASTLMAPGWA). 5 consecutive Ig-like C2-type domains span residues 24 to 109 (STSG…REAS), 110 to 199 (PPAK…RVMS), 251 to 365 (PEDL…APLN), 368 to 464 (PGLL…VSIN), and 469 to 559 (PKFS…VQLV). Residues 24–582 (STSGFLRVPQ…GGDGFLVTRA (559 aa)) lie on the Extracellular side of the membrane. Disulfide bonds link C47–C96, C138–C188, C276–C354, C399–C448, and C491–C543. N336, N418, N430, N445, N513, and N525 each carry an N-linked (GlcNAc...) asparagine glycan. Residues 583–603 (VLITMTVALAYIVLVVGLMLW) traverse the membrane as a helical segment. Residues 604–1035 (CRYRRQARKA…SKAMQSVAEK (432 aa)) lie on the Cytoplasmic side of the membrane. Disordered stretches follow at residues 623–683 (AGGD…KSVY) and 721–775 (AQSD…KEEE). Positions 658 to 676 (KSNGDAQKSDDTACSQQSR) are enriched in polar residues. S681 carries the post-translational modification Phosphoserine. The Protein kinase; inactive domain occupies 693–1029 (LSELLQIGRG…QLGSALSKAM (337 aa)). The segment covering 723-734 (SDKDADTEKQHS) has biased composition (basic and acidic residues). A compositionally biased stretch (acidic residues) spans 766 to 775 (DDIEEIKEEE).

The protein belongs to the protein kinase superfamily. Tyr protein kinase family. Insulin receptor subfamily. In terms of assembly, interacts with plexA; component of a receptor complex that mediates the repulsive signaling in response to Semaphorin ligands.

It is found in the cell membrane. Functionally, acts as a calcium-dependent, homophilic cell adhesion molecule that regulates neural recognition during the development of the nervous system. Component of the repulsive Plexin signaling response to regulate motor axon guidance at the embryonic stage. Also component of a receptor complex that is required in the adult visual system to innervate the lamina layer; specific targeting of R1-R6 axons. The protein is Tyrosine-protein kinase-like otk of Drosophila persimilis (Fruit fly).